The chain runs to 117 residues: uncharacterized protein (117 aa).

Residues 10–32 (VCYLGDIAASGFLNSIATALIAV) form a helical membrane-spanning segment.

The protein localises to the membrane. This is an uncharacterized protein from Rickettsia conorii (strain ATCC VR-613 / Malish 7).